Here is an 871-residue protein sequence, read N- to C-terminus: Protein translocase subunit SecA (871 aa).

ATP is bound by residues Gln-80, 98 to 102 (GEGKT), and Asp-537.

This sequence belongs to the SecA family. Monomer and homodimer. Part of the essential Sec protein translocation apparatus which comprises SecA, SecYEG and auxiliary proteins SecDF. Other proteins may also be involved. A single SecA monomer interacts with SecY in the channel.

Its subcellular location is the cell inner membrane. The protein localises to the cytoplasm. The catalysed reaction is ATP + H2O + cellular proteinSide 1 = ADP + phosphate + cellular proteinSide 2.. Functionally, part of the Sec protein translocase complex. Interacts with the SecYEG preprotein conducting channel. Has a central role in coupling the hydrolysis of ATP to the transfer of proteins into and across the cell membrane, serving as an ATP-driven molecular motor driving the stepwise translocation of polypeptide chains across the membrane. The protein is Protein translocase subunit SecA of Thermotoga maritima (strain ATCC 43589 / DSM 3109 / JCM 10099 / NBRC 100826 / MSB8).